Consider the following 327-residue polypeptide: o-succinylbenzoate synthase (327 aa).

The Proton donor role is filled by lysine 110. Mg(2+)-binding residues include aspartate 138, glutamate 165, and aspartate 188. The Proton acceptor role is filled by lysine 212.

It belongs to the mandelate racemase/muconate lactonizing enzyme family. MenC type 1 subfamily. The cofactor is a divalent metal cation.

The catalysed reaction is (1R,6R)-6-hydroxy-2-succinyl-cyclohexa-2,4-diene-1-carboxylate = 2-succinylbenzoate + H2O. Its pathway is quinol/quinone metabolism; 1,4-dihydroxy-2-naphthoate biosynthesis; 1,4-dihydroxy-2-naphthoate from chorismate: step 4/7. It participates in quinol/quinone metabolism; menaquinone biosynthesis. Converts 2-succinyl-6-hydroxy-2,4-cyclohexadiene-1-carboxylate (SHCHC) to 2-succinylbenzoate (OSB). In Mycobacterium ulcerans (strain Agy99), this protein is o-succinylbenzoate synthase.